Here is a 503-residue protein sequence, read N- to C-terminus: Protein DETOXIFICATION 36 (503 aa).

Helical transmembrane passes span 54–74 (LFHLAAPAIFVYVINNGMSML), 87–107 (LAAASLGNSGFNMFTLGLMLG), 137–157 (IVLVITGLPMTLLFIFSKPLL), 166–186 (VASVASVFVYGMIPMIFAYAV), 203–223 (SAYISAATLVIHLILSWLSVF), 225–245 (FGWGLLGLSVVHSLSWWIIVL), 271–293 (GLWDFFQLSAASAVMLCLESWYS), 313–333 (LAICMSISAMSFMVSVGFNAA), 355–375 (AVTTGVSFLLSLFEAIVILSW), 399–419 (FLAITIVLNGVQPVLSGVAVG), 427–447 (AYVNIGCYYIVGIPIGYVLGF), and 456–476 (IWTGMIGGTLMQTIILVIVTF).

This sequence belongs to the multi antimicrobial extrusion (MATE) (TC 2.A.66.1) family.

It localises to the membrane. The protein is Protein DETOXIFICATION 36 of Arabidopsis thaliana (Mouse-ear cress).